The sequence spans 669 residues: Very long-chain fatty acid transport protein (669 aa).

Residues 1 to 5 lie on the Cytoplasmic side of the membrane; the sequence is MSPIQ. The helical transmembrane segment at 6–26 threads the bilayer; the sequence is VVVFALSRIFLLLFRLIKLII. The Extracellular segment spans residues 27–148; it reads TPIQKSLGYL…YVAIDCTNKP (122 aa). The helical transmembrane segment at 149–169 threads the bilayer; sequence LFVFLWLSLWNIGAIPAFLNY. Over 170–270 the chain is Cytoplasmic; the sequence is NTKGTPLVHS…TGLPKSAIMS (101 aa). ATP is bound at residue 256 to 267; sequence YTSGTTGLPKSA. An intramembrane segment occupies 271–339; it reads WRKSSVGCQV…FWKQVYLTGA (69 aa). Residues 340-669 are Cytoplasmic-facing; the sequence is THIQYVGEVC…EAIDAQTIKL (330 aa). Residues 501–551 carry the FACS motif; the sequence is DAWYRCGDLLKADEYGLWYFLDRMGDTFRWKSENVSTTEVEDQLTASNKEQ. The C-terminal peroxisome targeting signal (PTS1) motif lies at 667 to 669; sequence IKL.

This sequence belongs to the ATP-dependent AMP-binding enzyme family. Interacts with fatty acyl-CoA synthetases FAA1 and FAA4.

It is found in the lipid droplet. The protein localises to the cell membrane. The protein resides in the peroxisome membrane. Its subcellular location is the peroxisome. The catalysed reaction is a very long-chain fatty acid + ATP + CoA = a very long-chain fatty acyl-CoA + AMP + diphosphate. It catalyses the reaction tetracosanoate + ATP + CoA = tetracosanoyl-CoA + AMP + diphosphate. In terms of biological role, acyl-CoA synthetase required for both the import of long chain fatty acids (LCFAs) (C14-C18) and the activation very long chain fatty acids (VLCFAs) (C20-C26) by esterification of the fatty acids into metabolically active CoA-thioesters for subsequent degradation or incorporation into phospholipids. The transport and fatty acyl-CoA synthetase activities are genetically separable and are thus independent activities. Esterifies VLCFAs in the peroxisome matrix. The VLCFAs are actively transported into peroxisomes by a PXA1-PXA2 heterodimeric transporter in the peroxisomal membrane. This chain is Very long-chain fatty acid transport protein (FAT1), found in Saccharomyces cerevisiae (strain ATCC 204508 / S288c) (Baker's yeast).